The following is a 394-amino-acid chain: Phosphoglycerate kinase (394 aa).

Residues 21–23, R37, 60–63, R119, and R152 each bind substrate; these read DFN and HLGR. Residues K202, E324, and 350–353 each bind ATP; that span reads GGDS.

It belongs to the phosphoglycerate kinase family. As to quaternary structure, monomer.

It localises to the cytoplasm. It carries out the reaction (2R)-3-phosphoglycerate + ATP = (2R)-3-phospho-glyceroyl phosphate + ADP. It participates in carbohydrate degradation; glycolysis; pyruvate from D-glyceraldehyde 3-phosphate: step 2/5. The protein is Phosphoglycerate kinase of Herpetosiphon aurantiacus (strain ATCC 23779 / DSM 785 / 114-95).